Here is a 25-residue protein sequence, read N- to C-terminus: Aggression-stimulating peptide (25 aa).

Expressed by the skin glands of male frogs.

Its subcellular location is the secreted. Functionally, stimulates aggressive behavior in male frogs. No effect on female frogs. This chain is Aggression-stimulating peptide, found in Leptodactylus fallax (Mountain chicken frog).